An 807-amino-acid chain; its full sequence is DNA gyrase subunit B (807 aa).

The 115-residue stretch at 429 to 543 folds into the Toprim domain; that stretch reads SELFIVEGDS…KGYLYIAQPP (115 aa). Residues Glu435, Asp508, and Asp510 each coordinate Mg(2+).

Belongs to the type II topoisomerase GyrB family. As to quaternary structure, heterotetramer, composed of two GyrA and two GyrB chains. In the heterotetramer, GyrA contains the active site tyrosine that forms a transient covalent intermediate with DNA, while GyrB binds cofactors and catalyzes ATP hydrolysis. Requires Mg(2+) as cofactor. The cofactor is Mn(2+). It depends on Ca(2+) as a cofactor.

Its subcellular location is the cytoplasm. The enzyme catalyses ATP-dependent breakage, passage and rejoining of double-stranded DNA.. Its function is as follows. A type II topoisomerase that negatively supercoils closed circular double-stranded (ds) DNA in an ATP-dependent manner to modulate DNA topology and maintain chromosomes in an underwound state. Negative supercoiling favors strand separation, and DNA replication, transcription, recombination and repair, all of which involve strand separation. Also able to catalyze the interconversion of other topological isomers of dsDNA rings, including catenanes and knotted rings. Type II topoisomerases break and join 2 DNA strands simultaneously in an ATP-dependent manner. The sequence is that of DNA gyrase subunit B from Rickettsia prowazekii (strain Madrid E).